The chain runs to 499 residues: Glycerol kinase (499 aa).

Residue T12 participates in ADP binding. ATP contacts are provided by T12, T13, and S14. T12 is a sn-glycerol 3-phosphate binding site. R16 is a binding site for ADP. Residues R82, E83, and Y134 each coordinate sn-glycerol 3-phosphate. Positions 82, 83, and 134 each coordinate glycerol. H230 bears the Phosphohistidine; by HPr mark. D244 serves as a coordination point for sn-glycerol 3-phosphate. 2 residues coordinate glycerol: D244 and Q245. ADP-binding residues include T266 and G309. ATP-binding residues include T266, G309, Q313, and G410. ADP-binding residues include G410 and N414.

It belongs to the FGGY kinase family. As to quaternary structure, homotetramer and homodimer (in equilibrium). Post-translationally, the phosphoenolpyruvate-dependent sugar phosphotransferase system (PTS), including enzyme I, and histidine-containing protein (HPr) are required for the phosphorylation, which leads to the activation of the enzyme.

The enzyme catalyses glycerol + ATP = sn-glycerol 3-phosphate + ADP + H(+). It functions in the pathway polyol metabolism; glycerol degradation via glycerol kinase pathway; sn-glycerol 3-phosphate from glycerol: step 1/1. With respect to regulation, activated by phosphorylation and inhibited by fructose 1,6-bisphosphate (FBP). Its function is as follows. Key enzyme in the regulation of glycerol uptake and metabolism. Catalyzes the phosphorylation of glycerol to yield sn-glycerol 3-phosphate. This Staphylococcus epidermidis (strain ATCC 12228 / FDA PCI 1200) protein is Glycerol kinase.